A 391-amino-acid polypeptide reads, in one-letter code: 3-ketoacyl-CoA thiolase (391 aa).

The Acyl-thioester intermediate role is filled by Cys95. Catalysis depends on proton acceptor residues His347 and Cys377.

It belongs to the thiolase-like superfamily. Thiolase family. As to quaternary structure, heterotetramer of two alpha chains (FadB) and two beta chains (FadA).

The protein localises to the cytoplasm. It carries out the reaction an acyl-CoA + acetyl-CoA = a 3-oxoacyl-CoA + CoA. It functions in the pathway lipid metabolism; fatty acid beta-oxidation. Catalyzes the final step of fatty acid oxidation in which acetyl-CoA is released and the CoA ester of a fatty acid two carbons shorter is formed. The polypeptide is 3-ketoacyl-CoA thiolase (Pseudomonas aeruginosa (strain UCBPP-PA14)).